The primary structure comprises 518 residues: Arrestin-related trafficking adapter 10 (518 aa).

A Glycyl lysine isopeptide (Lys-Gly) (interchain with G-Cter in ubiquitin) cross-link involves residue Lys-118.

It belongs to the ART10 family. As to quaternary structure, interacts with RSP5. Post-translationally, ubiquitinated by RSP5.

The protein resides in the cytoplasm. In terms of biological role, may regulate endocytosis by recruiting RSP5 ubiquitin ligase activity to specific plasma membrane proteins in response to extracellular stimuli. The protein is Arrestin-related trafficking adapter 10 (ART10) of Saccharomyces cerevisiae (strain Lalvin EC1118 / Prise de mousse) (Baker's yeast).